Reading from the N-terminus, the 229-residue chain is 2,3-bisphosphoglycerate-dependent phosphoglycerate mutase (229 aa).

Residues 8-15 (RHGESAWN), 21-22 (TG), Arg-60, 87-90 (ERHY), Lys-98, 114-115 (RR), and 183-184 (GN) contribute to the substrate site. The Tele-phosphohistidine intermediate role is filled by His-9. Glu-87 functions as the Proton donor/acceptor in the catalytic mechanism.

This sequence belongs to the phosphoglycerate mutase family. BPG-dependent PGAM subfamily. As to quaternary structure, homodimer.

It carries out the reaction (2R)-2-phosphoglycerate = (2R)-3-phosphoglycerate. Its pathway is carbohydrate degradation; glycolysis; pyruvate from D-glyceraldehyde 3-phosphate: step 3/5. Its function is as follows. Catalyzes the interconversion of 2-phosphoglycerate and 3-phosphoglycerate. The sequence is that of 2,3-bisphosphoglycerate-dependent phosphoglycerate mutase from Polynucleobacter asymbioticus (strain DSM 18221 / CIP 109841 / QLW-P1DMWA-1) (Polynucleobacter necessarius subsp. asymbioticus).